A 143-amino-acid polypeptide reads, in one-letter code: Large ribosomal subunit protein uL15 (143 aa).

The disordered stretch occupies residues 1–51 (MELNTIKPASGAKHAKRRVGRGIGSGLGKTAGRGHKGQKSRAGGYHKVGFE). Over residues 21 to 31 (RGIGSGLGKTA) the composition is skewed to gly residues.

It belongs to the universal ribosomal protein uL15 family. Part of the 50S ribosomal subunit.

Its function is as follows. Binds to the 23S rRNA. This chain is Large ribosomal subunit protein uL15, found in Methylibium petroleiphilum (strain ATCC BAA-1232 / LMG 22953 / PM1).